The sequence spans 380 residues: Queuine tRNA-ribosyltransferase (380 aa).

The active-site Proton acceptor is aspartate 95. Substrate-binding positions include 95–99 (DSGGF), aspartate 149, glutamine 192, and glycine 219. The tract at residues 250–256 (GVGSADA) is RNA binding. Catalysis depends on aspartate 269, which acts as the Nucleophile. The tract at residues 274-278 (TRIAR) is RNA binding; important for wobble base 34 recognition. The Zn(2+) site is built by cysteine 307, cysteine 309, cysteine 312, and histidine 338.

The protein belongs to the queuine tRNA-ribosyltransferase family. In terms of assembly, homodimer. Within each dimer, one monomer is responsible for RNA recognition and catalysis, while the other monomer binds to the replacement base PreQ1. The cofactor is Zn(2+).

It catalyses the reaction 7-aminomethyl-7-carbaguanine + guanosine(34) in tRNA = 7-aminomethyl-7-carbaguanosine(34) in tRNA + guanine. It participates in tRNA modification; tRNA-queuosine biosynthesis. Its function is as follows. Catalyzes the base-exchange of a guanine (G) residue with the queuine precursor 7-aminomethyl-7-deazaguanine (PreQ1) at position 34 (anticodon wobble position) in tRNAs with GU(N) anticodons (tRNA-Asp, -Asn, -His and -Tyr). Catalysis occurs through a double-displacement mechanism. The nucleophile active site attacks the C1' of nucleotide 34 to detach the guanine base from the RNA, forming a covalent enzyme-RNA intermediate. The proton acceptor active site deprotonates the incoming PreQ1, allowing a nucleophilic attack on the C1' of the ribose to form the product. After dissociation, two additional enzymatic reactions on the tRNA convert PreQ1 to queuine (Q), resulting in the hypermodified nucleoside queuosine (7-(((4,5-cis-dihydroxy-2-cyclopenten-1-yl)amino)methyl)-7-deazaguanosine). This chain is Queuine tRNA-ribosyltransferase, found in Lactiplantibacillus plantarum (strain ATCC BAA-793 / NCIMB 8826 / WCFS1) (Lactobacillus plantarum).